A 141-amino-acid polypeptide reads, in one-letter code: Small ribosomal subunit protein eS12 (141 aa).

This sequence belongs to the eukaryotic ribosomal protein eS12 family. As to quaternary structure, component of the small ribosomal subunit. Mature ribosomes consist of a small (40S) and a large (60S) subunit. The 40S subunit contains about 32 different proteins and 1 molecule of RNA (18S). The 60S subunit contains about 42 different proteins and 3 molecules of RNA (28S, 5.8S and 5S).

It localises to the cytoplasm. Its function is as follows. Component of the ribosome, a large ribonucleoprotein complex responsible for the synthesis of proteins in the cell. The small ribosomal subunit (SSU) binds messenger RNAs (mRNAs) and translates the encoded message by selecting cognate aminoacyl-transfer RNA (tRNA) molecules. The large subunit (LSU) contains the ribosomal catalytic site termed the peptidyl transferase center (PTC), which catalyzes the formation of peptide bonds, thereby polymerizing the amino acids delivered by tRNAs into a polypeptide chain. The nascent polypeptides leave the ribosome through a tunnel in the LSU and interact with protein factors that function in enzymatic processing, targeting, and the membrane insertion of nascent chains at the exit of the ribosomal tunnel. This Plasmodium falciparum (isolate 3D7) protein is Small ribosomal subunit protein eS12.